The chain runs to 123 residues: Small ribosomal subunit protein uS12 (123 aa).

The tract at residues 1 to 32 (MPTIQQLVRKGRKDKKAKVKTAALKGSPQRRG) is disordered. Basic residues predominate over residues 9–19 (RKGRKDKKAKV). Position 89 is a 3-methylthioaspartic acid (aspartate 89).

It belongs to the universal ribosomal protein uS12 family. Part of the 30S ribosomal subunit. Contacts proteins S8 and S17. May interact with IF1 in the 30S initiation complex.

Its function is as follows. With S4 and S5 plays an important role in translational accuracy. In terms of biological role, interacts with and stabilizes bases of the 16S rRNA that are involved in tRNA selection in the A site and with the mRNA backbone. Located at the interface of the 30S and 50S subunits, it traverses the body of the 30S subunit contacting proteins on the other side and probably holding the rRNA structure together. The combined cluster of proteins S8, S12 and S17 appears to hold together the shoulder and platform of the 30S subunit. This is Small ribosomal subunit protein uS12 from Corynebacterium kroppenstedtii (strain DSM 44385 / JCM 11950 / CIP 105744 / CCUG 35717).